Here is a 366-residue protein sequence, read N- to C-terminus: Probable dual-specificity RNA methyltransferase RlmN (366 aa).

Glu108 (proton acceptor) is an active-site residue. Positions 114–352 (YSDRSTLCIS…CTVRDTKGQE (239 aa)) constitute a Radical SAM core domain. Cys121 and Cys357 are disulfide-bonded. Positions 128, 132, and 135 each coordinate [4Fe-4S] cluster. Residues 178–179 (GE), Ser212, 235–237 (SLH), and Asn314 contribute to the S-adenosyl-L-methionine site. Cys357 functions as the S-methylcysteine intermediate in the catalytic mechanism.

It belongs to the radical SAM superfamily. RlmN family. The cofactor is [4Fe-4S] cluster.

It localises to the cytoplasm. The enzyme catalyses adenosine(2503) in 23S rRNA + 2 reduced [2Fe-2S]-[ferredoxin] + 2 S-adenosyl-L-methionine = 2-methyladenosine(2503) in 23S rRNA + 5'-deoxyadenosine + L-methionine + 2 oxidized [2Fe-2S]-[ferredoxin] + S-adenosyl-L-homocysteine. It carries out the reaction adenosine(37) in tRNA + 2 reduced [2Fe-2S]-[ferredoxin] + 2 S-adenosyl-L-methionine = 2-methyladenosine(37) in tRNA + 5'-deoxyadenosine + L-methionine + 2 oxidized [2Fe-2S]-[ferredoxin] + S-adenosyl-L-homocysteine. Specifically methylates position 2 of adenine 2503 in 23S rRNA and position 2 of adenine 37 in tRNAs. The chain is Probable dual-specificity RNA methyltransferase RlmN from Corynebacterium glutamicum (strain ATCC 13032 / DSM 20300 / JCM 1318 / BCRC 11384 / CCUG 27702 / LMG 3730 / NBRC 12168 / NCIMB 10025 / NRRL B-2784 / 534).